We begin with the raw amino-acid sequence, 90 residues long: MQFFVYSAVAAGFGIAIAAFGCGIGQGMAVRGAVEGIARNPEASGKVTVTMLIGLAMIESLSIYALVVSLILIYANPVSTAMQGFVGLGK.

A run of 2 helical transmembrane segments spans residues 4–24 (FVYS…GCGI) and 53–73 (IGLA…LILI).

Belongs to the ATPase C chain family. In terms of assembly, F-type ATPases have 2 components, F(1) - the catalytic core - and F(0) - the membrane proton channel. F(1) has five subunits: alpha(3), beta(3), gamma(1), delta(1), epsilon(1). F(0) has three main subunits: a(1), b(2) and c(10-14). The alpha and beta chains form an alternating ring which encloses part of the gamma chain. F(1) is attached to F(0) by a central stalk formed by the gamma and epsilon chains, while a peripheral stalk is formed by the delta and b chains.

The protein resides in the cell inner membrane. Functionally, f(1)F(0) ATP synthase produces ATP from ADP in the presence of a proton or sodium gradient. F-type ATPases consist of two structural domains, F(1) containing the extramembraneous catalytic core and F(0) containing the membrane proton channel, linked together by a central stalk and a peripheral stalk. During catalysis, ATP synthesis in the catalytic domain of F(1) is coupled via a rotary mechanism of the central stalk subunits to proton translocation. Its function is as follows. Key component of the F(0) channel; it plays a direct role in translocation across the membrane. A homomeric c-ring of between 10-14 subunits forms the central stalk rotor element with the F(1) delta and epsilon subunits. In Syntrophobacter fumaroxidans (strain DSM 10017 / MPOB), this protein is ATP synthase subunit c.